Reading from the N-terminus, the 266-residue chain is Protein SCO2 homolog, mitochondrial (266 aa).

Residues 1-41 constitute a mitochondrion transit peptide; it reads MLLLTRSPTAWHRLSQLKPRVLPGTLGGQALHLRSWLLSRQ. The Mitochondrial matrix portion of the chain corresponds to 42–60; that stretch reads GPAETGGQGQPQGPGLRTR. Residues 61–78 form a helical membrane-spanning segment; that stretch reads LLITGLFGAGLGGAWLAL. The Mitochondrial intermembrane portion of the chain corresponds to 79–266; sequence RAEKERLQQQ…HMAAFRSVLS (188 aa). In terms of domain architecture, Thioredoxin spans 85–259; sequence LQQQKRTEAL…ISDSVRRHMA (175 aa). Positions 133, 137, and 224 each coordinate Cu cation. A disulfide bridge links C133 with C137.

Belongs to the SCO1/2 family. In terms of assembly, homodimer. Interacts with COA6. Found in a complex with TMEM177, COX20, COA6, MT-CO2/COX2, COX18 and SCO1. Interacts with TMEM177 in a COX20-dependent manner. Interacts with COX20 in a MT-CO2/COX2- and COX18-dependent manner. Interacts with COX16. Ubiquitous.

It is found in the mitochondrion inner membrane. Functionally, copper metallochaperone essential for the synthesis and maturation of cytochrome c oxidase subunit II (MT-CO2/COX2) by facilitating the incorporation of copper into the Cu(A) site of MT-CO2/COX2. Could also act as a thiol-disulfide oxidoreductase to regulate the redox state of the cysteines in SCO1 during maturation of MT-CO2/COX2. In Homo sapiens (Human), this protein is Protein SCO2 homolog, mitochondrial (SCO2).